The chain runs to 180 residues: Adenine phosphoribosyltransferase (180 aa).

The protein belongs to the purine/pyrimidine phosphoribosyltransferase family. As to quaternary structure, homodimer.

Its subcellular location is the cytoplasm. The enzyme catalyses AMP + diphosphate = 5-phospho-alpha-D-ribose 1-diphosphate + adenine. The protein operates within purine metabolism; AMP biosynthesis via salvage pathway; AMP from adenine: step 1/1. Catalyzes a salvage reaction resulting in the formation of AMP, that is energically less costly than de novo synthesis. The chain is Adenine phosphoribosyltransferase from Actinobacillus succinogenes (strain ATCC 55618 / DSM 22257 / CCUG 43843 / 130Z).